Consider the following 103-residue polypeptide: Large ribosomal subunit protein eL30 (103 aa).

The protein belongs to the eukaryotic ribosomal protein eL30 family.

This is Large ribosomal subunit protein eL30 from Methanosarcina mazei (strain ATCC BAA-159 / DSM 3647 / Goe1 / Go1 / JCM 11833 / OCM 88) (Methanosarcina frisia).